Here is a 557-residue protein sequence, read N- to C-terminus: Cytochrome P450 monooxygenase FSL4 (557 aa).

Transmembrane regions (helical) follow at residues 6–26 (LWLV…IFLL) and 32–52 (IVVC…YWTV). Residues N127 and N393 are each glycosylated (N-linked (GlcNAc...) asparagine). C494 contacts heme.

The protein belongs to the cytochrome P450 family. Heme is required as a cofactor.

The protein localises to the membrane. It functions in the pathway secondary metabolite biosynthesis. Functionally, cytochrome P450 monooxygenase; part of the gene cluster that mediates the biosynthesis of fusarielins F, G and H, decaketide compounds with 5 methylations and a decaline core that act as mycoestrogens as they stimulate growth of MCF-7 breast cancer cells. The initial compound in the pathway is produced by the reducing polyketide synthase FSL1. FSL1 lacks an active enoyl reductase (ER) domain and biosynthesis of fusarielins relies on the trans-acting enoyl reductase FSL5, before it is released through hydrolysis catalyzed by the thioesterase FSL2. Fusarielins F, G, and H have a C11=C12 cis double bond and is fully reduced between C10 and C11 and between C12 and C13. FSL3 can be involved in the formation of the C11=C12 cis double bond by moving a hypothetical C10=C11 or C12=C13 trans double bond to form prefusarielin. Prefusarielin is oxygenated at C15 and C16 by FSL4, resulting in fusarielin F, which subsequently is epoxidized into fusarielin G by the same enzyme. The final step in the pathway is a reduction of the carboxylic acid moiety to yield fusarielin H via a still undetermined mechanism. This Gibberella zeae (strain ATCC MYA-4620 / CBS 123657 / FGSC 9075 / NRRL 31084 / PH-1) (Wheat head blight fungus) protein is Cytochrome P450 monooxygenase FSL4.